We begin with the raw amino-acid sequence, 121 residues long: uncharacterized protein (121 aa).

A signal peptide spans 1–31 (MILNNKGFIRILEATIAGIMVILVFSYLVMS).

To B.burgdorferi BB0465 N-terminal region.

This is an uncharacterized protein from Methanocaldococcus jannaschii (strain ATCC 43067 / DSM 2661 / JAL-1 / JCM 10045 / NBRC 100440) (Methanococcus jannaschii).